We begin with the raw amino-acid sequence, 766 residues long: 5-methyltetrahydropteroyltriglutamate--homocysteine methyltransferase (766 aa).

Residues 16-19 and Lys-119 each bind 5-methyltetrahydropteroyltri-L-glutamate; that span reads RELK. L-homocysteine contacts are provided by residues 440–442 and Glu-493; that span reads IGS. L-methionine is bound by residues 440 to 442 and Glu-493; that span reads IGS. 5-methyltetrahydropteroyltri-L-glutamate-binding positions include 524 to 525 and Trp-570; that span reads RC. Asp-608 lines the L-homocysteine pocket. Asp-608 is a binding site for L-methionine. Glu-614 contributes to the 5-methyltetrahydropteroyltri-L-glutamate binding site. Positions 650, 652, and 674 each coordinate Zn(2+). His-703 (proton donor) is an active-site residue. Residue Cys-735 participates in Zn(2+) binding.

This sequence belongs to the vitamin-B12 independent methionine synthase family. The cofactor is Zn(2+).

It catalyses the reaction 5-methyltetrahydropteroyltri-L-glutamate + L-homocysteine = tetrahydropteroyltri-L-glutamate + L-methionine. The protein operates within amino-acid biosynthesis; L-methionine biosynthesis via de novo pathway; L-methionine from L-homocysteine (MetE route): step 1/1. Functionally, catalyzes the transfer of a methyl group from 5-methyltetrahydrofolate to homocysteine resulting in methionine formation. This Pseudomonas aeruginosa (strain LESB58) protein is 5-methyltetrahydropteroyltriglutamate--homocysteine methyltransferase.